The sequence spans 134 residues: UPF0216 protein AF_0460 (134 aa).

It belongs to the UPF0216 family.

The polypeptide is UPF0216 protein AF_0460 (Archaeoglobus fulgidus (strain ATCC 49558 / DSM 4304 / JCM 9628 / NBRC 100126 / VC-16)).